A 347-amino-acid polypeptide reads, in one-letter code: NADH-ubiquinone oxidoreductase chain 2 (347 aa).

10 helical membrane-spanning segments follow: residues 13–33 (IVLGTMIVMTSSHWLMIWMGF), 59–79 (YFLTQATASMLLMLAIIINLV), 96–116 (IIMTVALAMKMGLAPFHFWVP), 122–142 (ISLLSGLILLTWQKLAPLSVL), 144–164 (VISPIINLDLLLTMSILSILI), 178–200 (ILAYSSIAHMGWMTSILIFNPMM), 210–232 (LMTATTFTLFMTTSTTTTLALSH), 246–266 (IIMLSLGGLPPLVGFLPKWMI), 276–296 (IILATLMAITALLNLFFYMRL), and 326–346 (LPMLIVLSTMTLPLAPAMILL).

The protein belongs to the complex I subunit 2 family. In terms of assembly, core subunit of respiratory chain NADH dehydrogenase (Complex I) which is composed of 45 different subunits. Interacts with TMEM242.

It localises to the mitochondrion inner membrane. The enzyme catalyses a ubiquinone + NADH + 5 H(+)(in) = a ubiquinol + NAD(+) + 4 H(+)(out). Core subunit of the mitochondrial membrane respiratory chain NADH dehydrogenase (Complex I) which catalyzes electron transfer from NADH through the respiratory chain, using ubiquinone as an electron acceptor. Essential for the catalytic activity and assembly of complex I. This chain is NADH-ubiquinone oxidoreductase chain 2, found in Rhynchonycteris naso (Brazilian long-nosed bat).